We begin with the raw amino-acid sequence, 590 residues long: Aspartate--tRNA(Asp/Asn) ligase (590 aa).

E175 is a binding site for L-aspartate. An aspartate region spans residues 199–202 (QQYK). The L-aspartate site is built by R221 and H450. 221–223 (RDE) lines the ATP pocket. An ATP-binding site is contributed by E484. R491 lines the L-aspartate pocket. 536–539 (GVDR) lines the ATP pocket.

This sequence belongs to the class-II aminoacyl-tRNA synthetase family. Type 1 subfamily. In terms of assembly, homodimer.

The protein localises to the cytoplasm. The catalysed reaction is tRNA(Asx) + L-aspartate + ATP = L-aspartyl-tRNA(Asx) + AMP + diphosphate. Its function is as follows. Aspartyl-tRNA synthetase with relaxed tRNA specificity since it is able to aspartylate not only its cognate tRNA(Asp) but also tRNA(Asn). Reaction proceeds in two steps: L-aspartate is first activated by ATP to form Asp-AMP and then transferred to the acceptor end of tRNA(Asp/Asn). This chain is Aspartate--tRNA(Asp/Asn) ligase, found in Bradyrhizobium diazoefficiens (strain JCM 10833 / BCRC 13528 / IAM 13628 / NBRC 14792 / USDA 110).